The following is a 523-amino-acid chain: UDP-glucuronosyltransferase 3A2 (523 aa).

An N-terminal signal peptide occupies residues 1-22 (MAAHRRWLLMSFLFLEVILLEA). Residues 23 to 487 (AKILTISTLS…QPWHEQYMLD (465 aa)) lie on the Extracellular side of the membrane. Asparagine 52 is a glycosylation site (N-linked (GlcNAc...) asparagine). A helical membrane pass occupies residues 488–508 (VFLFLLGLMLGTLWLSVKVLV). The Cytoplasmic segment spans residues 509–523 (AVTRYLSIATKVKEA).

The protein belongs to the UDP-glycosyltransferase family. Highly expressed in kidney, while it is expressed at low levels in liver. Not detected in other tissues examined.

It is found in the membrane. It catalyses the reaction glucuronate acceptor + UDP-alpha-D-glucuronate = acceptor beta-D-glucuronoside + UDP + H(+). In terms of biological role, UDP-glucuronosyltransferases catalyze phase II biotransformation reactions in which lipophilic substrates are conjugated with glucuronic acid to increase water solubility and enhance excretion. They are of major importance in the conjugation and subsequent elimination of potentially toxic xenobiotics and endogenous compounds. The sequence is that of UDP-glucuronosyltransferase 3A2 (Ugt3a2) from Mus musculus (Mouse).